A 236-amino-acid chain; its full sequence is MKTKQDLQELYFPTPKLIEWENGVRQYSSVRGDTEVLLSYVPPHTNVEPHQHKEVQIGLVVSGELSMTVGDVTRKMTALESAYIAPPYVPHGARNETDQEVIAIDIKRLKAGETYTSPEDYFLNIFKTRDLLPGMEVTFFVEDWVEIMLANIPGNGGEMPFHKHRNEQIGICIGGGYDMTIEGCKVDMTFGTAYFCDPREDHGAINRFEKDSKSVNIFFPPRYNRAKAKKLEAKES.

Cupin type-2 domains are found at residues 40-106 (YVPP…AIDI) and 151-215 (NIPG…SKSV). A divalent metal cation is bound by residues H50, H52, Q56, H91, H162, H164, Q168, and H202. Y223 lines the substrate pocket.

As to quaternary structure, monomer. Requires Fe(2+) as cofactor. Co(2+) is required as a cofactor.

The protein localises to the cytoplasm. The catalysed reaction is 3-[(4R)-4-hydroxycyclohexa-1,5-dien-1-yl]-2-oxopropanoate = 3-[(1E,4R)-4-hydroxycyclohex-2-en-1-ylidene]pyruvate. It participates in antibiotic biosynthesis; bacilysin biosynthesis. In terms of biological role, part of the bacABCDEF operon responsible for the biosynthesis of the nonribosomally synthesized dipeptide antibiotic bacilysin, composed of L-alanine and L-anticapsin. Bacilysin is an irreversible inactivator of the glutaminase domain of glucosamine synthetase. BacB catalyzes the allylic isomerization of the endocyclic-delta(4),delta(8)-7R-dihydro-hydroxyphenylpyruvate (en-H2HPP) to generate a mixture of 3E,7R- and 3Z, 7R-olefins of the exocyclic-delta(3),delta(5)-dihydro-hydroxyphenylpyruvate (ex-H2HPP). The polypeptide is H2HPP isomerase (Bacillus amyloliquefaciens (Bacillus velezensis)).